The chain runs to 342 residues: UDP-3-O-acylglucosamine N-acyltransferase (342 aa).

The active-site Proton acceptor is the histidine 234.

It belongs to the transferase hexapeptide repeat family. LpxD subfamily. As to quaternary structure, homotrimer.

The enzyme catalyses a UDP-3-O-[(3R)-3-hydroxyacyl]-alpha-D-glucosamine + a (3R)-hydroxyacyl-[ACP] = a UDP-2-N,3-O-bis[(3R)-3-hydroxyacyl]-alpha-D-glucosamine + holo-[ACP] + H(+). It participates in bacterial outer membrane biogenesis; LPS lipid A biosynthesis. In terms of biological role, catalyzes the N-acylation of UDP-3-O-acylglucosamine using 3-hydroxyacyl-ACP as the acyl donor. Is involved in the biosynthesis of lipid A, a phosphorylated glycolipid that anchors the lipopolysaccharide to the outer membrane of the cell. The sequence is that of UDP-3-O-acylglucosamine N-acyltransferase from Oleidesulfovibrio alaskensis (strain ATCC BAA-1058 / DSM 17464 / G20) (Desulfovibrio alaskensis).